Here is a 125-residue protein sequence, read N- to C-terminus: Holo-[acyl-carrier-protein] synthase (125 aa).

Positions 8 and 57 each coordinate Mg(2+).

This sequence belongs to the P-Pant transferase superfamily. AcpS family. Mg(2+) serves as cofactor.

Its subcellular location is the cytoplasm. The catalysed reaction is apo-[ACP] + CoA = holo-[ACP] + adenosine 3',5'-bisphosphate + H(+). Functionally, transfers the 4'-phosphopantetheine moiety from coenzyme A to a Ser of acyl-carrier-protein. The polypeptide is Holo-[acyl-carrier-protein] synthase (Neisseria meningitidis serogroup C (strain 053442)).